Consider the following 277-residue polypeptide: Digeranylgeranylglyceryl phosphate synthase (277 aa).

8 helical membrane-spanning segments follow: residues 16–36 (LLAGIVGVLGSIVAAGGLPEL), 40–60 (ILVFLVVFLGCAGGNTINDYF), 83–105 (AALWYSVALFATGIVLAWFINIW), 107–124 (FLLAIVAYVTMFIYAWKL), 146–166 (GAIAVGEIGLAGTLALCAFLV), 202–222 (VGALFAILTVVASFLPIKAGI), 224–244 (LGYLAMLPVDAVILYSAFLIL), and 256–276 (QILLKVSVFLAVVAFLIASLV).

The protein belongs to the UbiA prenyltransferase family. DGGGP synthase subfamily. The cofactor is Mg(2+).

The protein resides in the cell membrane. It catalyses the reaction sn-3-O-(geranylgeranyl)glycerol 1-phosphate + (2E,6E,10E)-geranylgeranyl diphosphate = 2,3-bis-O-(geranylgeranyl)-sn-glycerol 1-phosphate + diphosphate. The protein operates within membrane lipid metabolism; glycerophospholipid metabolism. Its function is as follows. Prenyltransferase that catalyzes the transfer of the geranylgeranyl moiety of geranylgeranyl diphosphate (GGPP) to the C2 hydroxyl of (S)-3-O-geranylgeranylglyceryl phosphate (GGGP). This reaction is the second ether-bond-formation step in the biosynthesis of archaeal membrane lipids. This Thermococcus kodakarensis (strain ATCC BAA-918 / JCM 12380 / KOD1) (Pyrococcus kodakaraensis (strain KOD1)) protein is Digeranylgeranylglyceryl phosphate synthase.